Consider the following 843-residue polypeptide: Elongation factor 2 (843 aa).

Residues 17-253 (HNIRNMSVIA…LWGENFFDPA (237 aa)) enclose the tr-type G domain. 26-33 (AHVDHGKS) is a GTP binding site. Residues Thr57 and Thr59 each carry the phosphothreonine modification. 158 to 161 (NKMD) serves as a coordination point for GTP. His700 bears the Diphthamide mark.

Belongs to the TRAFAC class translation factor GTPase superfamily. Classic translation factor GTPase family. EF-G/EF-2 subfamily. Post-translationally, phosphorylation by EF-2 kinase completely inactivates EF-2.

It is found in the cytoplasm. The catalysed reaction is GTP + H2O = GDP + phosphate + H(+). Functionally, catalyzes the GTP-dependent ribosomal translocation step during translation elongation. During this step, the ribosome changes from the pre-translocational (PRE) to the post-translocational (POST) state as the newly formed A-site-bound peptidyl-tRNA and P-site-bound deacylated tRNA move to the P and E sites, respectively. Catalyzes the coordinated movement of the two tRNA molecules, the mRNA and conformational changes in the ribosome. The chain is Elongation factor 2 from Beta vulgaris (Sugar beet).